A 518-amino-acid polypeptide reads, in one-letter code: Lycopene epsilon cyclase, chloroplastic (518 aa).

Residue 100-128 (LIVIGCGPAGMSLAAEAGKRGLSVGLIGP) coordinates NAD(+). Transmembrane regions (helical) follow at residues 435–455 (FFLF…RIFF) and 469–489 (FLGS…MFAI).

This sequence belongs to the lycopene cyclase family. As to expression, expressed in leaves and roots. Detected in flower buds and lips.

The protein localises to the plastid. Its subcellular location is the chloroplast membrane. The catalysed reaction is a carotenoid psi-end group = a carotenoid epsilon-end group. It participates in carotenoid biosynthesis; alpha-zeacarotene biosynthesis. The protein operates within carotenoid biosynthesis; delta-carotene biosynthesis. Functionally, catalyzes the single epsilon-cyclization reaction which converts lycopene to delta-carotene and neurosporene to alpha-zeacarotene. Required for lutein biosynthesis. The chain is Lycopene epsilon cyclase, chloroplastic from Oncidium hybrid cultivar (Orchid).